The primary structure comprises 351 residues: Histidinol-phosphate aminotransferase (351 aa).

An N6-(pyridoxal phosphate)lysine modification is found at Lys213.

Belongs to the class-II pyridoxal-phosphate-dependent aminotransferase family. Histidinol-phosphate aminotransferase subfamily. In terms of assembly, homodimer. Requires pyridoxal 5'-phosphate as cofactor.

It catalyses the reaction L-histidinol phosphate + 2-oxoglutarate = 3-(imidazol-4-yl)-2-oxopropyl phosphate + L-glutamate. Its pathway is amino-acid biosynthesis; L-histidine biosynthesis; L-histidine from 5-phospho-alpha-D-ribose 1-diphosphate: step 7/9. The chain is Histidinol-phosphate aminotransferase from Thermoanaerobacter pseudethanolicus (strain ATCC 33223 / 39E) (Clostridium thermohydrosulfuricum).